The following is an 833-amino-acid chain: Glycerol-3-phosphate acyltransferase (833 aa).

The HXXXXD motif motif lies at 310 to 315 (HRSHID).

Belongs to the GPAT/DAPAT family.

The protein resides in the cell inner membrane. It catalyses the reaction sn-glycerol 3-phosphate + an acyl-CoA = a 1-acyl-sn-glycero-3-phosphate + CoA. It participates in phospholipid metabolism; CDP-diacylglycerol biosynthesis; CDP-diacylglycerol from sn-glycerol 3-phosphate: step 1/3. This chain is Glycerol-3-phosphate acyltransferase, found in Pseudomonas syringae pv. tomato (strain ATCC BAA-871 / DC3000).